The following is a 389-amino-acid chain: Chalcone synthase (389 aa).

The active site involves Cys164.

Belongs to the thiolase-like superfamily. Chalcone/stilbene synthases family.

The catalysed reaction is (E)-4-coumaroyl-CoA + 3 malonyl-CoA + 3 H(+) = 2',4,4',6'-tetrahydroxychalcone + 3 CO2 + 4 CoA. The protein operates within secondary metabolite biosynthesis; flavonoid biosynthesis. The primary product of this enzyme is 4,2',4',6'-tetrahydroxychalcone (also termed naringenin-chalcone or chalcone) which can under specific conditions spontaneously isomerize into naringenin. This chain is Chalcone synthase (CHS1), found in Casuarina glauca (Swamp oak).